The chain runs to 2696 residues: Protein ILITYHIA (2696 aa).

Over residues 1–18 (MSYSMVNASSAVSSPETA) the composition is skewed to polar residues. The tract at residues 1 to 26 (MSYSMVNASSAVSSPETAKNSDEPPP) is disordered. HEAT repeat units follow at residues 162–204 (DIAP…MKTF), 253–290 (STQASLLRIIMESSFRMRRACKRFMFHLFSQSQAIYSL), 303–340 (KDSPELLGLLLEFSCSSPALFEQSKAIFVDIYVKDVLN), 364–400 (EFQTVILPAAVKMLKRNPEIVLESVGFLLANVNIDLS), 401–438 (KYALELLPVILPQARHTDEDRRLGALSMVMCLSEKSSN), 487–525 (SLSRTICSFLIACYKDEGNEDVKLSILSAVASWASRSSV), 526–562 (AIQPNLVSFIAAGLKEKEALRRGHLRCVRIICRNPDT), 564–601 (SQISDLLSPLIQLVKTGFTKAVQRLDGIYALLIVSKIA), and 642–677 (VVCVDLLEVLLVEHSSRVLEAFSLKSLSQLLLFLLC). Residues 901-941 (KQEPSSNHSLKKGLASRETANSGRRDTAKLTKKADKGKTAK) form a disordered region. Over residues 923–941 (GRRDTAKLTKKADKGKTAK) the composition is skewed to basic and acidic residues. HEAT repeat units lie at residues 985 to 1021 (HSQLPFLATFLDPLLRSPIVSAAAFENLVKLARCTVQ), 1082 to 1118 (DTFTFIFPVLYHVLGVVPAYQASVGPALNELCLGLQA), 1188 to 1225 (HDLGTDYSGIFKALSHINLNVRLAAAEALADALHESPS), 1273 to 1311 (KDLPAVMTFLISRALADPNTDVRGKMINAGIMIIDKHGK), 1315 to 1355 (SLLF…HLAR), 1358 to 1395 (PKVHNVVEKLLEVLNTPSESVQRAVSTCLSPLVLSKQE), 1397 to 1433 (APALFLRLLDKLMKSDKYGERRGAAFGLAGVVMGFGI), 1436 to 1474 (LKKYGLIVTLQEALIDRNSAKRREGALLAFECLCEKLGK), 1478 to 1515 (PYVIKMLPLLLVSFSDQVGAVREAAECAARAMMSQLSA), 1516 to 1553 (YGVKLVLPSLLKGLEDKAWRTKQSSVQLLGAMAFCAPQ), 1564 to 1600 (PKLTEVFKTIQVLTDTHPKVQSAGQLALQQVGSVIKN), 1601 to 1638 (PEISSLVPTLLLALTDPNEYTRHALDTLLQTTFVNSVD), 1640 to 1677 (PSLALLVPIVHRGLRERSSETKKKASQIVGNMCSLVTE), 1683 to 1720 (PYIGLLLPEVKKVLVDPIPEVRSVAARAVGSLIRGMGE), 1722 to 1759 (NFPDLVPWLFETLKSDTSNVERYGAAQGLSEVIAALGT), 1761 to 1797 (YFENILPDLIRHCSHQKASVRDGYLTLFKFLPRSLGA), 1801 to 1838 (KYLQLVLPAILDGLADENESVRDAALGAGHVLVEHHAT), and 1840 to 1876 (SLPLLLPAVEDGIFNDNWRIRQSSVELLGDLLFKVAG). Residue serine 1887 is modified to Phosphoserine. HEAT repeat units follow at residues 1908 to 1945 (DKRNEVLAALYMVRTDVSLSVRQAALHVWKTIVANTPK), 1949 to 1986 (EIMPILMSTLISSLASPSSERRQVAGRSLGELVRKLGE), 1988 to 2024 (VLPLIIPILSKGLKDPDVDKRQGVCIGLNEVMASAGR), 2029 to 2066 (SFMDQLIPTIRTALCDSALEVRESAGLAFSTLYKSAGL), 2067 to 2102 (QAMDEIIPTLLEALEDDEMSTTALDGLKQIISVRTA), 2104 to 2137 (VLPHILPKLVHLPLSALNAHALGALAEVAGAGFN), 2138 to 2175 (THLGTILPALLSAMGGENKEVQELAQEAAERVVLVIDE), 2177 to 2213 (GVETLLSELLKGVSDSQASIRRSSAYLIGYFFKSSKL), 2217 to 2254 (DEAPNMISTLIVMLSDSDSTTVAVSWEALARVIGSVPK), 2258 to 2292 (PSYIKLVRDAVSTARDKERRKRKGGYVVIPGLCLP), 2293 to 2330 (KSLKPLLPVFLQGLISGSAELREQAAIGLGELIEVTSE), 2335 to 2373 (EFVIPITGPLIRIIGDRFPWQVKSAILATLIILIQRGGM), 2377 to 2414 (PFLPQLQTTFVKCLQDSTRTIRSSAAVALGKLSALSTR), 2416 to 2450 (DPLVGDLMTSFQAADSGVREAILSAMRGVIKHAGK), 2455 to 2492 (AVRVRIFDLLKDLMHHEDDQVRISATSMLGVLSQYLEA), 2494 to 2530 (QLSVLLQEVNDLSASQNWGARHGSVLCISSLLKHNPS), 2536 to 2573 (SLFSSMLNSLKSSLKDEKFPLRESSTKALGRLLLKQLA), 2580 to 2617 (KVVIDVLSSIVSALHDDSSEVRRRALSSLKAFAKDNPS), and 2620 to 2658 (MANISVIGPPLAECLKDGNTPVRLAAERCALHVFQLTKG).

The protein belongs to the GCN1 family.

Involved in immunity against bacterial infection and in non-host resistance. Required for embryo development. Required for systemic acquired resistance, but functions in an salicylic acid-independent manner. Required for bacterium-triggered stomatal closure response. This Arabidopsis thaliana (Mouse-ear cress) protein is Protein ILITYHIA.